The sequence spans 321 residues: Pirin-like protein 2 (321 aa).

4 residues coordinate Fe cation: His88, His90, His132, and Glu134.

Belongs to the pirin family. In terms of assembly, interacts with RD21A, RD21B and XCP2.

It is found in the cytoplasm. Its subcellular location is the cytosol. The protein localises to the nucleus. Involved in susceptibility to the bacterial plant pathogen Ralstonia solanacearum. Stabilizes the xylem cysteine protease XCP2 by blocking its autolysis. The sequence is that of Pirin-like protein 2 from Arabidopsis thaliana (Mouse-ear cress).